A 311-amino-acid polypeptide reads, in one-letter code: p-hydroxybenzoic acid efflux pump subunit AaeA (311 aa).

The helical transmembrane segment at 11 to 31 (IAITLILVLLGIIAIFKAWVF) threads the bilayer.

It belongs to the membrane fusion protein (MFP) (TC 8.A.1) family.

It is found in the cell inner membrane. Functionally, forms an efflux pump with AaeB. This is p-hydroxybenzoic acid efflux pump subunit AaeA from Serratia proteamaculans (strain 568).